Consider the following 631-residue polypeptide: ATP-dependent DNA helicase 2 subunit 1 (631 aa).

The Ku domain occupies 262–487 (FYLGPNLSMS…VEFFQKIIKK (226 aa)). The segment at 550 to 570 (AEPHKKRAAKSTTAGASGPKM) is disordered.

It belongs to the ku70 family. In terms of assembly, heterodimer of a 70 kDa and a 80 kDa subunit.

It is found in the nucleus. The protein localises to the chromosome. The enzyme catalyses ATP + H2O = ADP + phosphate + H(+). In terms of biological role, single-stranded DNA-dependent ATP-dependent helicase. Involved in non-homologous end joining (NHEJ) DNA double strand break repair. Sequence-specific DNA-binding protein that has a high affinity for a 31 bp sequence in the Yp1 gene. Site-specific DNA binding to 31 bp P element inverted repeats. The protein is ATP-dependent DNA helicase 2 subunit 1 (Irbp) of Drosophila melanogaster (Fruit fly).